The sequence spans 711 residues: Polyribonucleotide nucleotidyltransferase (711 aa).

Positions 490 and 496 each coordinate Mg(2+). Residues 557-616 enclose the KH domain; the sequence is PRIETMQIPTDKIREVIGSGGKVIREIVETSGAKVDINDDGIIKIASANGEAIKKAYEMI. The 69-residue stretch at 626-694 folds into the S1 motif domain; it reads GKVYTGTVVK…DRGKVRLSMK (69 aa).

Belongs to the polyribonucleotide nucleotidyltransferase family. Mg(2+) serves as cofactor.

It is found in the cytoplasm. The catalysed reaction is RNA(n+1) + phosphate = RNA(n) + a ribonucleoside 5'-diphosphate. In terms of biological role, involved in mRNA degradation. Catalyzes the phosphorolysis of single-stranded polyribonucleotides processively in the 3'- to 5'-direction. The polypeptide is Polyribonucleotide nucleotidyltransferase (Dinoroseobacter shibae (strain DSM 16493 / NCIMB 14021 / DFL 12)).